Reading from the N-terminus, the 271-residue chain is 5'-AMP-activated protein kinase subunit beta-2 (271 aa).

Residues 1-46 (MGNTTSERVSGERHGAKAARAEGGGHGPGKEHKIMVGSTDDPSVFS) form a disordered region. Ser38 is subject to Phosphoserine; by ULK1. Thr39 carries the phosphothreonine; by ULK1 modification. Ser68 carries the phosphoserine; by ULK1 modification. Ser94 and Ser107 each carry phosphoserine. Thr147 is modified (phosphothreonine). A phosphoserine mark is found at Ser157, Ser169, Ser173, and Ser183.

It belongs to the 5'-AMP-activated protein kinase beta subunit family. As to quaternary structure, AMPK is a heterotrimer of an alpha catalytic subunit (PRKAA1 or PRKAA2), a beta (PRKAB1 or PRKAB2) and a gamma non-catalytic subunits (PRKAG1, PRKAG2 or PRKAG3). In terms of processing, phosphorylated when associated with the catalytic subunit (PRKAA1 or PRKAA2). Phosphorylated by ULK1 and ULK2; leading to negatively regulate AMPK activity and suggesting the existence of a regulatory feedback loop between ULK1, ULK2 and AMPK.

Its function is as follows. Non-catalytic subunit of AMP-activated protein kinase (AMPK), an energy sensor protein kinase that plays a key role in regulating cellular energy metabolism. In response to reduction of intracellular ATP levels, AMPK activates energy-producing pathways and inhibits energy-consuming processes: inhibits protein, carbohydrate and lipid biosynthesis, as well as cell growth and proliferation. AMPK acts via direct phosphorylation of metabolic enzymes, and by longer-term effects via phosphorylation of transcription regulators. Also acts as a regulator of cellular polarity by remodeling the actin cytoskeleton; probably by indirectly activating myosin. Beta non-catalytic subunit acts as a scaffold on which the AMPK complex assembles, via its C-terminus that bridges alpha (PRKAA1 or PRKAA2) and gamma subunits (PRKAG1, PRKAG2 or PRKAG3). In Mus musculus (Mouse), this protein is 5'-AMP-activated protein kinase subunit beta-2 (Prkab2).